The chain runs to 492 residues: Fibroblast growth factor receptor substrate 3 (492 aa).

Glycine 2 carries N-myristoyl glycine lipidation. Positions 13–115 (VPHNHPTKFK…QCNSINVTEE (103 aa)) constitute an IRS-type PTB domain. Disordered stretches follow at residues 122-230 (SSHP…SDQR), 328-414 (LPPV…PPRQ), 426-454 (GTARPKGPQNPSVSGAPGPTPHPVRSSDS), and 469-492 (LQRALPRDDGAVRKTRHNSTDLPL). Polar residues predominate over residues 371 to 382 (QKPTSTRASARS).

Binds NGFR, GRB2, PTPN11 and ERK2. Binds FGFR1 and NTRK1. Phosphorylated on tyrosine residues upon stimulation by BFGF or NGFB. Phosphorylated by ULK2 in vitro.

The protein localises to the membrane. Adapter protein that links FGF and NGF receptors to downstream signaling pathways. Involved in the activation of MAP kinases. Down-regulates ERK2 signaling by interfering with the phosphorylation and nuclear translocation of ERK2. In Mus musculus (Mouse), this protein is Fibroblast growth factor receptor substrate 3 (Frs3).